The sequence spans 98 residues: uncharacterized protein (98 aa).

This is an uncharacterized protein from Acidianus two-tailed virus (ATV).